A 629-amino-acid polypeptide reads, in one-letter code: Carboxypeptidase Y homolog ARB_06361 (629 aa).

Positions 1–18 (MLITWLLDVLLLAPPVAA) are cleaved as a signal peptide. Residues Asn-157 and Asn-197 are each glycosylated (N-linked (GlcNAc...) asparagine). The active site involves Ser-235. Cysteines 326 and 355 form a disulfide. N-linked (GlcNAc...) asparagine glycans are attached at residues Asn-405 and Asn-418. Asp-453 is a catalytic residue. Position 456 (Cys-456) interacts with substrate. N-linked (GlcNAc...) asparagine glycans are attached at residues Asn-463 and Asn-554.

Belongs to the peptidase S10 family.

Its subcellular location is the secreted. The catalysed reaction is Release of a C-terminal amino acid with broad specificity.. In terms of biological role, involved in degradation of small peptides. The protein is Carboxypeptidase Y homolog ARB_06361 of Arthroderma benhamiae (strain ATCC MYA-4681 / CBS 112371) (Trichophyton mentagrophytes).